Reading from the N-terminus, the 83-residue chain is UPF0297 protein Moth_1643 (83 aa).

This sequence belongs to the UPF0297 family.

This chain is UPF0297 protein Moth_1643, found in Moorella thermoacetica (strain ATCC 39073 / JCM 9320).